Consider the following 286-residue polypeptide: Thymidylate synthase (286 aa).

Residues arginine 21 and 136-137 each bind dUMP; that span reads RR. The active-site Nucleophile is the cysteine 156. DUMP-binding positions include 176-179, asparagine 187, and 217-219; these read RSVD and HIY. Position 179 (aspartate 179) interacts with (6R)-5,10-methylene-5,6,7,8-tetrahydrofolate. Alanine 285 contacts (6R)-5,10-methylene-5,6,7,8-tetrahydrofolate.

It belongs to the thymidylate synthase family. In terms of assembly, homodimer.

It carries out the reaction dUMP + (6R)-5,10-methylene-5,6,7,8-tetrahydrofolate = 7,8-dihydrofolate + dTMP. The protein operates within pyrimidine metabolism; dTTP biosynthesis. In Enterobacteria phage T4 (Bacteriophage T4), this protein is Thymidylate synthase (TD).